A 398-amino-acid polypeptide reads, in one-letter code: Cytochrome b (398 aa).

Residues 45–65 (LGSIAGIALVIQIITGVILAM) form a helical membrane-spanning segment. His-95 and His-109 together coordinate heme b. The next 9 helical transmembrane spans lie at 96 to 116 (AVGA…GLYY), 129 to 149 (IGII…VLPW), 164 to 184 (FSAI…GFSV), 192 to 212 (FFSL…LHLV), 245 to 265 (FVGF…EPNY), 277 to 297 (PLVT…YAIL), 304 to 324 (LGGV…PWLD), 339 to 359 (MAFW…GQPA), and 366 to 386 (ISRF…PLIG). Heme b-binding residues include His-196 and His-210.

This sequence belongs to the cytochrome b family. As to quaternary structure, the main subunits of complex b-c1 are: cytochrome b, cytochrome c1 and the Rieske protein. The cofactor is heme b.

The protein localises to the cell membrane. Its function is as follows. Component of the ubiquinol-cytochrome c reductase complex (complex III or cytochrome b-c1 complex), which is a respiratory chain that generates an electrochemical potential coupled to ATP synthesis. This Rickettsia conorii (strain ATCC VR-613 / Malish 7) protein is Cytochrome b (petB).